Here is an 882-residue protein sequence, read N- to C-terminus: DNA mismatch repair protein MutS (882 aa).

ATP is bound at residue 629 to 636; sequence GPNMGGKS.

This sequence belongs to the DNA mismatch repair MutS family.

Functionally, this protein is involved in the repair of mismatches in DNA. It is possible that it carries out the mismatch recognition step. This protein has a weak ATPase activity. This Ralstonia nicotianae (strain ATCC BAA-1114 / GMI1000) (Ralstonia solanacearum) protein is DNA mismatch repair protein MutS.